Consider the following 266-residue polypeptide: L-aspartate dehydrogenase (266 aa).

NAD(+) is bound by residues alanine 123 and asparagine 189. Histidine 219 is an active-site residue.

It belongs to the L-aspartate dehydrogenase family.

It catalyses the reaction L-aspartate + NADP(+) + H2O = oxaloacetate + NH4(+) + NADPH + H(+). The enzyme catalyses L-aspartate + NAD(+) + H2O = oxaloacetate + NH4(+) + NADH + H(+). The protein operates within cofactor biosynthesis; NAD(+) biosynthesis; iminoaspartate from L-aspartate (dehydrogenase route): step 1/1. Its function is as follows. Specifically catalyzes the NAD or NADP-dependent dehydrogenation of L-aspartate to iminoaspartate. In Cupriavidus necator (strain ATCC 17699 / DSM 428 / KCTC 22496 / NCIMB 10442 / H16 / Stanier 337) (Ralstonia eutropha), this protein is L-aspartate dehydrogenase.